A 494-amino-acid polypeptide reads, in one-letter code: UDP-N-acetylmuramoyl-L-alanyl-D-glutamate--2,6-diaminopimelate ligase (494 aa).

Position 30 (Ser-30) interacts with UDP-N-acetyl-alpha-D-muramoyl-L-alanyl-D-glutamate. 110 to 116 (GTNGKTS) contributes to the ATP binding site. UDP-N-acetyl-alpha-D-muramoyl-L-alanyl-D-glutamate contacts are provided by residues 152-153 (TT), Ser-179, and Arg-187. N6-carboxylysine is present on Lys-219. Meso-2,6-diaminopimelate is bound by residues Arg-380, 404-407 (DNPR), Gly-456, and Glu-460. Positions 404 to 407 (DNPR) match the Meso-diaminopimelate recognition motif motif.

The protein belongs to the MurCDEF family. MurE subfamily. The cofactor is Mg(2+). Carboxylation is probably crucial for Mg(2+) binding and, consequently, for the gamma-phosphate positioning of ATP.

The protein resides in the cytoplasm. It catalyses the reaction UDP-N-acetyl-alpha-D-muramoyl-L-alanyl-D-glutamate + meso-2,6-diaminopimelate + ATP = UDP-N-acetyl-alpha-D-muramoyl-L-alanyl-gamma-D-glutamyl-meso-2,6-diaminopimelate + ADP + phosphate + H(+). It participates in cell wall biogenesis; peptidoglycan biosynthesis. Catalyzes the addition of meso-diaminopimelic acid to the nucleotide precursor UDP-N-acetylmuramoyl-L-alanyl-D-glutamate (UMAG) in the biosynthesis of bacterial cell-wall peptidoglycan. The polypeptide is UDP-N-acetylmuramoyl-L-alanyl-D-glutamate--2,6-diaminopimelate ligase (Alkaliphilus metalliredigens (strain QYMF)).